The primary structure comprises 815 residues: Probable inorganic carbon transporter subunit DabA (815 aa).

Residues C334, D336, H507, and C522 each contribute to the Zn(2+) site.

It belongs to the inorganic carbon transporter (TC 9.A.2) DabA family. As to quaternary structure, forms a complex with DabB. The cofactor is Zn(2+).

It localises to the cell inner membrane. Functionally, part of an energy-coupled inorganic carbon pump. This chain is Probable inorganic carbon transporter subunit DabA, found in Ectopseudomonas mendocina (strain ymp) (Pseudomonas mendocina).